A 708-amino-acid polypeptide reads, in one-letter code: uncharacterized protein (708 aa).

4 disordered regions span residues 1–79, 119–301, 349–390, and 410–461; these read MHAR…RRSS, AGEF…IHQR, YLSH…GDEN, and SNSF…KRQR. Pro residues predominate over residues 65–74; the sequence is LPPPLPPPPV. A compositionally biased stretch (polar residues) spans 238 to 249; sequence DEAQSKTGSSSA. Residues 260 to 274 are compositionally biased toward low complexity; sequence SKVSEGSSSLSAGSG. Positions 410–419 are enriched in polar residues; sequence SNSFPSSILR. Residues 442-461 show a composition bias toward basic and acidic residues; it reads VGEKRPGEGSDLEEGSKRQR.

This is an uncharacterized protein from Arabidopsis thaliana (Mouse-ear cress).